The primary structure comprises 377 residues: Nitric oxide reductase FlRd-NAD(+) reductase (377 aa).

It belongs to the FAD-dependent oxidoreductase family. Requires FAD as cofactor.

It is found in the cytoplasm. It carries out the reaction 2 reduced [nitric oxide reductase rubredoxin domain] + NAD(+) + H(+) = 2 oxidized [nitric oxide reductase rubredoxin domain] + NADH. It functions in the pathway nitrogen metabolism; nitric oxide reduction. Its function is as follows. One of at least two accessory proteins for anaerobic nitric oxide (NO) reductase. Reduces the rubredoxin moiety of NO reductase. The protein is Nitric oxide reductase FlRd-NAD(+) reductase of Klebsiella pneumoniae (strain 342).